Consider the following 373-residue polypeptide: Homoserine O-acetyltransferase (373 aa).

The AB hydrolase-1 domain occupies 46–355 (NAILICHPLT…NPNGHDSFLL (310 aa)). Residue serine 151 is the Nucleophile of the active site. Arginine 221 contacts substrate. Catalysis depends on residues aspartate 317 and histidine 350. Aspartate 351 is a substrate binding site.

This sequence belongs to the AB hydrolase superfamily. MetX family. In terms of assembly, homodimer.

Its subcellular location is the cytoplasm. It catalyses the reaction L-homoserine + acetyl-CoA = O-acetyl-L-homoserine + CoA. Its pathway is amino-acid biosynthesis; L-methionine biosynthesis via de novo pathway; O-acetyl-L-homoserine from L-homoserine: step 1/1. In terms of biological role, transfers an acetyl group from acetyl-CoA to L-homoserine, forming acetyl-L-homoserine. The chain is Homoserine O-acetyltransferase from Zymomonas mobilis subsp. mobilis (strain ATCC 31821 / ZM4 / CP4).